An 852-amino-acid chain; its full sequence is Taste receptor type 1 member 3 (852 aa).

The first 20 residues, 1–20, serve as a signal peptide directing secretion; it reads MLGPAVLGLSLWALLQPGAG. The Extracellular segment spans residues 21 to 570; the sequence is APLCLSQQLR…FLAWGEPAVL (550 aa). 8 N-linked (GlcNAc...) asparagine glycosylation sites follow: Asn-85, Asn-130, Asn-264, Asn-285, Asn-380, Asn-411, Asn-432, and Asn-475. Residues 571 to 591 traverse the membrane as a helical segment; it reads LLLLLLSLALGLVLAALGLFV. Residues 592-603 lie on the Cytoplasmic side of the membrane; it reads HHRDSPLVQASG. The helical transmembrane segment at 604 to 624 threads the bilayer; sequence GPLACFGLVCLGLVCLSVLLF. Residues 625–639 lie on the Extracellular side of the membrane; sequence PGQPSPAQCLAQQPL. A helical transmembrane segment spans residues 640–660; it reads SHLPLTGCLSTLFLQAAEIFV. Residues 661-682 lie on the Cytoplasmic side of the membrane; sequence ESELPLSWADRLSGCLRGPWAW. Residues 683 to 703 traverse the membrane as a helical segment; the sequence is LVVLLAMLVEVALCTWYLVAF. The Extracellular segment spans residues 704–729; that stretch reads PPEVVTDWHMLPTEALVHCRTRSWVS. A helical transmembrane segment spans residues 730–750; sequence FGLAHATNATLAFLCFLGTFL. At 751–762 the chain is on the cytoplasmic side; sequence VRSQPGRYNRAR. The helical transmembrane segment at 763 to 783 threads the bilayer; that stretch reads GLTFAMLAYFITWVSFVPLLA. Residues 784 to 791 lie on the Extracellular side of the membrane; sequence NVQVVLRP. The helical transmembrane segment at 792–812 threads the bilayer; that stretch reads AVQMGALLLCVLGILAAFHLP. Residues 813–852 are Cytoplasmic-facing; that stretch reads RCYLLIRQPGLNTPEFFLGGGPGDAQGRNDGDTGNQGKHE. Positions 833-852 are disordered; that stretch reads GPGDAQGRNDGDTGNQGKHE. Residues 839–852 show a composition bias toward basic and acidic residues; sequence GRNDGDTGNQGKHE.

It belongs to the G-protein coupled receptor 3 family. TAS1R subfamily. Forms homodimers or heterodimers with TAS1R1 and TAS1R2.

It is found in the cell membrane. Functionally, putative taste receptor. TAS1R1/TAS1R3 responds to the umami taste stimulus (the taste of monosodium glutamate). TAS1R2/TAS1R3 recognizes diverse natural and synthetic sweeteners. TAS1R3 is essential for the recognition and response to the disaccharide trehalose. Sequence differences within and between species can significantly influence the selectivity and specificity of taste responses. In Gorilla gorilla gorilla (Western lowland gorilla), this protein is Taste receptor type 1 member 3 (TAS1R3).